Here is a 217-residue protein sequence, read N- to C-terminus: Protein-L-isoaspartate O-methyltransferase (217 aa).

The active site involves Ser-65.

It belongs to the methyltransferase superfamily. L-isoaspartyl/D-aspartyl protein methyltransferase family.

The protein resides in the cytoplasm. It catalyses the reaction [protein]-L-isoaspartate + S-adenosyl-L-methionine = [protein]-L-isoaspartate alpha-methyl ester + S-adenosyl-L-homocysteine. Its function is as follows. Catalyzes the methyl esterification of L-isoaspartyl residues in peptides and proteins that result from spontaneous decomposition of normal L-aspartyl and L-asparaginyl residues. It plays a role in the repair and/or degradation of damaged proteins. This Chlorobium limicola (strain DSM 245 / NBRC 103803 / 6330) protein is Protein-L-isoaspartate O-methyltransferase.